Reading from the N-terminus, the 279-residue chain is Energy-coupling factor transporter ATP-binding protein EcfA1 (279 aa).

Residues 5–240 form the ABC transporter domain; sequence IELKKVTFNY…GDELLQLGLD (236 aa). 40–47 lines the ATP pocket; the sequence is GHNGSGKS.

This sequence belongs to the ABC transporter superfamily. Energy-coupling factor EcfA family. Forms a stable energy-coupling factor (ECF) transporter complex composed of 2 membrane-embedded substrate-binding proteins (S component), 2 ATP-binding proteins (A component) and 2 transmembrane proteins (T component).

Its subcellular location is the cell membrane. ATP-binding (A) component of a common energy-coupling factor (ECF) ABC-transporter complex. Unlike classic ABC transporters this ECF transporter provides the energy necessary to transport a number of different substrates. In Streptococcus pyogenes serotype M28 (strain MGAS6180), this protein is Energy-coupling factor transporter ATP-binding protein EcfA1.